We begin with the raw amino-acid sequence, 207 residues long: Lipid A acyltransferase PagP (207 aa).

The N-terminal stretch at 1-24 is a signal peptide; sequence MKFDLTAACTLSATLLVSSGTVFA. Catalysis depends on residues H79, D122, and S123.

This sequence belongs to the lipid A palmitoyltransferase family. As to quaternary structure, homodimer.

It localises to the cell outer membrane. The enzyme catalyses a lipid A + a 1,2-diacyl-sn-glycero-3-phosphocholine = a hepta-acyl lipid A + a 2-acyl-sn-glycero-3-phosphocholine. It carries out the reaction a lipid IVA + a 1,2-diacyl-sn-glycero-3-phosphocholine = a lipid IVB + a 2-acyl-sn-glycero-3-phosphocholine. It catalyses the reaction a lipid IIA + a 1,2-diacyl-sn-glycero-3-phosphocholine = a lipid IIB + a 2-acyl-sn-glycero-3-phosphocholine. In terms of biological role, transfers a fatty acid residue from the sn-1 position of a phospholipid to the N-linked hydroxyfatty acid chain on the proximal unit of lipid A or its precursors. This chain is Lipid A acyltransferase PagP, found in Photorhabdus laumondii subsp. laumondii (strain DSM 15139 / CIP 105565 / TT01) (Photorhabdus luminescens subsp. laumondii).